The following is a 198-amino-acid chain: Putative pseudouridine methyltransferase (198 aa).

Positions 132 and 186 each coordinate S-adenosyl-L-methionine.

This sequence belongs to the methyltransferase superfamily. TrmY family.

The protein localises to the cytoplasm. The sequence is that of Putative pseudouridine methyltransferase from Vibrio vulnificus (strain CMCP6).